Consider the following 96-residue polypeptide: Protein C4 (96 aa).

G2 carries N-myristoyl glycine; by host lipidation. The interval S66 to M96 is disordered. Residues Q77 to D89 are compositionally biased toward polar residues.

This sequence belongs to the geminiviridae protein AC4/C4 family.

The protein resides in the host cell membrane. In terms of biological role, pathogenicity determinant. May act as a suppressor of RNA-mediated gene silencing, also known as post-transcriptional gene silencing (PTGS), a mechanism of plant viral defense that limits the accumulation of viral RNAs. This Solanum lycopersicum (Tomato) protein is Protein C4.